A 166-amino-acid polypeptide reads, in one-letter code: Interferon gamma (166 aa).

A signal peptide spans 1–23 (MNYTSYILAFQLCVILCSSGYYC). Q24 is subject to Pyrrolidone carboxylic acid. N39 and N106 each carry an N-linked (GlcNAc...) asparagine glycan.

It belongs to the type II (or gamma) interferon family. Homodimer. Interacts with IFNGR1 (via extracellular domain); this interaction promotes IFNGR1 dimerization. Released primarily from activated T lymphocytes.

The protein resides in the secreted. Its function is as follows. Type II interferon produced by immune cells such as T-cells and NK cells that plays crucial roles in antimicrobial, antiviral, and antitumor responses by activating effector immune cells and enhancing antigen presentation. Primarily signals through the JAK-STAT pathway after interaction with its receptor IFNGR1 to affect gene regulation. Upon IFNG binding, IFNGR1 intracellular domain opens out to allow association of downstream signaling components JAK2, JAK1 and STAT1, leading to STAT1 activation, nuclear translocation and transcription of IFNG-regulated genes. Many of the induced genes are transcription factors such as IRF1 that are able to further drive regulation of a next wave of transcription. Plays a role in class I antigen presentation pathway by inducing a replacement of catalytic proteasome subunits with immunoproteasome subunits. In turn, increases the quantity, quality, and repertoire of peptides for class I MHC loading. Increases the efficiency of peptide generation also by inducing the expression of activator PA28 that associates with the proteasome and alters its proteolytic cleavage preference. Up-regulates as well MHC II complexes on the cell surface by promoting expression of several key molecules such as cathepsins B/CTSB, H/CTSH, and L/CTSL. Participates in the regulation of hematopoietic stem cells during development and under homeostatic conditions by affecting their development, quiescence, and differentiation. The polypeptide is Interferon gamma (IFNG) (Ailuropoda melanoleuca (Giant panda)).